Here is a 257-residue protein sequence, read N- to C-terminus: Type III pantothenate kinase (257 aa).

Residue 11–18 (DSGNTAIK) participates in ATP binding. Substrate-binding positions include tyrosine 96 and 103 to 106 (GCDR). Aspartate 105 serves as the catalytic Proton acceptor. Aspartate 125 is a K(+) binding site. Residue threonine 128 coordinates ATP. Threonine 179 contributes to the substrate binding site.

Belongs to the type III pantothenate kinase family. As to quaternary structure, homodimer. Requires NH4(+) as cofactor. The cofactor is K(+).

The protein localises to the cytoplasm. The catalysed reaction is (R)-pantothenate + ATP = (R)-4'-phosphopantothenate + ADP + H(+). The protein operates within cofactor biosynthesis; coenzyme A biosynthesis; CoA from (R)-pantothenate: step 1/5. Functionally, catalyzes the phosphorylation of pantothenate (Pan), the first step in CoA biosynthesis. The polypeptide is Type III pantothenate kinase (Nitrosomonas eutropha (strain DSM 101675 / C91 / Nm57)).